A 215-amino-acid chain; its full sequence is uncharacterized protein (215 aa).

Disordered regions lie at residues 1-144 and 156-215; these read MPKG…PYLR and IQGH…GAPA. Composition is skewed to low complexity over residues 16–29, 49–58, 85–96, and 104–127; these read ASTP…ASPT, SSSWPKSPIK, SGSSSPGPSSSR, and STAA…RAAP.

This is an uncharacterized protein from Homo sapiens (Human).